A 497-amino-acid polypeptide reads, in one-letter code: Ethanolamine-phosphate phospho-lyase (497 aa).

K278 bears the N6-(pyridoxal phosphate)lysine mark. The disordered stretch occupies residues 440-497 (TGAETESGISKNTPCRTKMPKEAQSELLRDSSLESRENPSQKRNGLCTDSLLSKRLRT). A compositionally biased stretch (basic and acidic residues) spans 458 to 479 (MPKEAQSELLRDSSLESRENPS).

This sequence belongs to the class-III pyridoxal-phosphate-dependent aminotransferase family. Homotetramer. Pyridoxal 5'-phosphate is required as a cofactor.

It localises to the mitochondrion. It carries out the reaction phosphoethanolamine + H2O = acetaldehyde + NH4(+) + phosphate. Its function is as follows. Catalyzes the pyridoxal-phosphate-dependent breakdown of phosphoethanolamine, converting it to ammonia, inorganic phosphate and acetaldehyde. The polypeptide is Ethanolamine-phosphate phospho-lyase (ETNPPL) (Bos taurus (Bovine)).